A 95-amino-acid polypeptide reads, in one-letter code: Class I hydrophobin 13 (95 aa).

4 cysteine pairs are disulfide-bonded: C14–C74, C21–C68, C22–C55, and C75–C88. N-linked (GlcNAc...) asparagine glycans are attached at residues N23 and N77.

Belongs to the fungal hydrophobin family. Self-assembles to form functional amyloid fibrils called rodlets. Self-assembly into fibrillar rodlets occurs spontaneously at hydrophobic:hydrophilic interfaces and the rodlets further associate laterally to form amphipathic monolayers.

It is found in the secreted. Its subcellular location is the cell wall. Aerial growth, conidiation, and dispersal of filamentous fungi in the environment rely upon a capability of their secreting small amphipathic proteins called hydrophobins (HPBs) with low sequence identity. Class I can self-assemble into an outermost layer of rodlet bundles on aerial cell surfaces, conferring cellular hydrophobicity that supports fungal growth, development and dispersal; whereas Class II form highly ordered films at water-air interfaces through intermolecular interactions but contribute nothing to the rodlet structure. The polypeptide is Class I hydrophobin 13 (Pleurotus ostreatus (strain PC15) (Oyster mushroom)).